The sequence spans 542 residues: Probable protein kinase UbiB (542 aa).

The region spanning 123 to 505 is the Protein kinase domain; the sequence is DFDEQALASA…ADNKTYNVKM (383 aa). ATP-binding positions include 129-137 and K156; that span reads LASASIAQV. D291 serves as the catalytic Proton acceptor. The chain crosses the membrane as a helical span at residues 506-526; sequence IIMGSIILSLLWQFNSLPLWL.

The protein belongs to the ABC1 family. UbiB subfamily.

Its subcellular location is the cell inner membrane. It participates in cofactor biosynthesis; ubiquinone biosynthesis [regulation]. Is probably a protein kinase regulator of UbiI activity which is involved in aerobic coenzyme Q (ubiquinone) biosynthesis. This chain is Probable protein kinase UbiB, found in Haemophilus ducreyi (strain 35000HP / ATCC 700724).